The sequence spans 850 residues: Pro-neuregulin-2, membrane-bound isoform (850 aa).

Positions 1–96 (MRQVCCSALP…AAAAGGMRRD (96 aa)) are disordered. A propeptide spanning residues 1 to 111 (MRQVCCSALP…SMLLFGVSLA (111 aa)) is cleaved from the precursor. Low complexity predominate over residues 20 to 59 (SSYSDSSSSSSERSSSSSSSSSESGSSSRSSSNNSSISRP). N-linked (GlcNAc...) asparagine glycans are attached at residues asparagine 52 and asparagine 53. Residues 60–74 (AAPPEPRPQQQPQPR) are compositionally biased toward pro residues. Residues 75–92 (SPAARRAAARSRAAAAGG) are compositionally biased toward low complexity. Residues 112–405 (CYSPSLKSVQ…QKAEELYQKR (294 aa)) are Extracellular-facing. Residues asparagine 147, asparagine 278, and asparagine 346 are each glycosylated (N-linked (GlcNAc...) asparagine). Residues 237-332 (PKLKKMKSQT…RGRLYVNSVS (96 aa)) enclose the Ig-like C2-type domain. 4 disulfide bridges follow: cysteine 257-cysteine 311, cysteine 345-cysteine 359, cysteine 353-cysteine 370, and cysteine 372-cysteine 381. The region spanning 341-382 (HARKCNETAKSYCVNGGVCYYIEGINQLSCKCPNGFFGQRCL) is the EGF-like domain. Residues 406 to 426 (VLTITGICVALLVVGIVCVVA) traverse the membrane as a helical segment. The Cytoplasmic portion of the chain corresponds to 427-850 (YCKTKKQRKQ…PRAKQDSAPL (424 aa)). Disordered regions lie at residues 492–535 (TFSG…DSQS), 566–585 (EERR…SLRD), 647–681 (LLRH…YYPA), 700–788 (LPAS…DGAL), and 801–850 (AHDA…SAPL). A compositionally biased stretch (low complexity) spans 494-506 (SGSHSCSPSHHCS). Basic and acidic residues predominate over residues 514–527 (HRHESHTWSLERSE). Residues 651–665 (PAPPGPGPGPGPGPG) are compositionally biased toward pro residues. The segment covering 750 to 767 (GLAAQRARAARDSLSLSS) has biased composition (low complexity).

Belongs to the neuregulin family. As to quaternary structure, interacts with ERBB3 and ERBB4. Post-translationally, proteolytic cleavage close to the plasma membrane on the external face leads to the release of the soluble growth factor form. In terms of processing, extensive glycosylation precedes the proteolytic cleavage. In terms of tissue distribution, restricted to the cerebellum in the adult.

It localises to the cell membrane. It is found in the secreted. Its function is as follows. Direct ligand for ERBB3 and ERBB4 tyrosine kinase receptors. Concomitantly recruits ERBB1 and ERBB2 coreceptors, resulting in ligand-stimulated tyrosine phosphorylation and activation of the ERBB receptors. May also promote the heterodimerization with the EGF receptor. The chain is Pro-neuregulin-2, membrane-bound isoform (NRG2) from Homo sapiens (Human).